We begin with the raw amino-acid sequence, 318 residues long: Lipoyl synthase (318 aa).

[4Fe-4S] cluster-binding residues include cysteine 64, cysteine 69, cysteine 75, cysteine 90, cysteine 94, cysteine 97, and serine 304. The Radical SAM core domain occupies 76 to 293 (FSGGTATFMI…AEEGYKMGFK (218 aa)).

Belongs to the radical SAM superfamily. Lipoyl synthase family. It depends on [4Fe-4S] cluster as a cofactor.

The protein localises to the cytoplasm. The enzyme catalyses [[Fe-S] cluster scaffold protein carrying a second [4Fe-4S](2+) cluster] + N(6)-octanoyl-L-lysyl-[protein] + 2 oxidized [2Fe-2S]-[ferredoxin] + 2 S-adenosyl-L-methionine + 4 H(+) = [[Fe-S] cluster scaffold protein] + N(6)-[(R)-dihydrolipoyl]-L-lysyl-[protein] + 4 Fe(3+) + 2 hydrogen sulfide + 2 5'-deoxyadenosine + 2 L-methionine + 2 reduced [2Fe-2S]-[ferredoxin]. The protein operates within protein modification; protein lipoylation via endogenous pathway; protein N(6)-(lipoyl)lysine from octanoyl-[acyl-carrier-protein]: step 2/2. Functionally, catalyzes the radical-mediated insertion of two sulfur atoms into the C-6 and C-8 positions of the octanoyl moiety bound to the lipoyl domains of lipoate-dependent enzymes, thereby converting the octanoylated domains into lipoylated derivatives. The sequence is that of Lipoyl synthase from Pseudomonas syringae pv. tomato (strain ATCC BAA-871 / DC3000).